The primary structure comprises 326 residues: Large ribosomal subunit protein uL4 (326 aa).

The large ribosomal subunit protein uL4 stretch occupies residues 1–211 (MASCVVKNWQ…EKLKARWGSG (211 aa)). 2 disordered regions span residues 44–76 (ARQG…ARAG) and 211–326 (GAAA…EDND). The segment covering 60-71 (GGRKPWRQKGTG) has biased composition (basic residues). The tract at residues 212 to 326 (AAAAAPTQAD…TAAAEEEDND (115 aa)) is unknown. Over residues 221-238 (DRLEDQAQAAEREARPVE) the composition is skewed to basic and acidic residues. 2 stretches are compositionally biased toward low complexity: residues 252-279 (EAQA…QVQE) and 294-312 (QGQA…PPAG). Residues 313–326 (EEAETAAAEEEDND) show a composition bias toward acidic residues.

It belongs to the universal ribosomal protein uL4 family. Part of the 50S ribosomal subunit.

In terms of biological role, one of the primary rRNA binding proteins, this protein initially binds near the 5'-end of the 23S rRNA. It is important during the early stages of 50S assembly. It makes multiple contacts with different domains of the 23S rRNA in the assembled 50S subunit and ribosome. Its function is as follows. Forms part of the polypeptide exit tunnel. The polypeptide is Large ribosomal subunit protein uL4 (Synechococcus sp. (strain JA-3-3Ab) (Cyanobacteria bacterium Yellowstone A-Prime)).